The following is a 362-amino-acid chain: DNA replication and repair protein RecF (362 aa).

G30 to T37 lines the ATP pocket.

It belongs to the RecF family.

The protein localises to the cytoplasm. Its function is as follows. The RecF protein is involved in DNA metabolism; it is required for DNA replication and normal SOS inducibility. RecF binds preferentially to single-stranded, linear DNA. It also seems to bind ATP. The protein is DNA replication and repair protein RecF of Proteus mirabilis (strain HI4320).